The following is a 513-amino-acid chain: Xylose import ATP-binding protein XylG (513 aa).

ABC transporter domains are found at residues 5 to 242 (LEMK…VGRE) and 259 to 505 (LRIE…LRSE). 37–44 (GENGSGKS) is a binding site for ATP.

The protein belongs to the ABC transporter superfamily. Xylose importer (TC 3.A.1.2.4) family. In terms of assembly, the complex is composed of two ATP-binding proteins (XylG), two transmembrane proteins (XylH) and a solute-binding protein (XylF).

It localises to the cell inner membrane. It carries out the reaction D-xylose(out) + ATP + H2O = D-xylose(in) + ADP + phosphate + H(+). Its function is as follows. Part of the ABC transporter complex XylFGH involved in xylose import. Responsible for energy coupling to the transport system. This chain is Xylose import ATP-binding protein XylG, found in Escherichia coli O6:K15:H31 (strain 536 / UPEC).